The sequence spans 291 residues: ATP synthase gamma chain (291 aa).

Belongs to the ATPase gamma chain family. As to quaternary structure, F-type ATPases have 2 components, CF(1) - the catalytic core - and CF(0) - the membrane proton channel. CF(1) has five subunits: alpha(3), beta(3), gamma(1), delta(1), epsilon(1). CF(0) has three main subunits: a, b and c.

Its subcellular location is the cell inner membrane. Its function is as follows. Produces ATP from ADP in the presence of a proton gradient across the membrane. The gamma chain is believed to be important in regulating ATPase activity and the flow of protons through the CF(0) complex. This chain is ATP synthase gamma chain, found in Cupriavidus metallidurans (strain ATCC 43123 / DSM 2839 / NBRC 102507 / CH34) (Ralstonia metallidurans).